The sequence spans 479 residues: Lysosomal protective protein (479 aa).

The first 27 residues, 1–27 (MFRAALWPPVLLLLQLLLLACAPGGEG), serve as a signal peptide directing secretion. Intrachain disulfides connect Cys87/Cys361, Cys239/Cys255, Cys240/Cys245, and Cys280/Cys330. Residue Asn144 is glycosylated (N-linked (GlcNAc...) asparagine). Ser177 is an active-site residue. Asn332 carries N-linked (GlcNAc...) asparagine glycosylation. Active-site residues include Asp399 and His456.

This sequence belongs to the peptidase S10 family. As to quaternary structure, heterodimer of a 32 kDa chain and a 20 kDa chain; disulfide-linked.

It localises to the lysosome. The enzyme catalyses Release of a C-terminal amino acid with broad specificity.. Its function is as follows. Protective protein appears to be essential for both the activity of beta-galactosidase and neuraminidase, it associates with these enzymes and exerts a protective function necessary for their stability and activity. This protein is also a carboxypeptidase and can deamidate tachykinins. The protein is Lysosomal protective protein (CTSA) of Bos taurus (Bovine).